Here is a 438-residue protein sequence, read N- to C-terminus: Aflatoxin cluster transcriptional coactivator aflS (438 aa).

Residues 65–134 enclose the HTH iclR-type domain; the sequence is LALYNQLLAC…PSPGHVAHSV (70 aa). The segment at residues 95-114 is a DNA-binding region (H-T-H motif); it reads FEDVADIAGVPECRLRRLVR.

As to quaternary structure, interacts with aflR.

It localises to the nucleus. In terms of biological role, transcription factor; part of the gene cluster that mediates the biosynthesis of aflatoxin, a polyketide-derived furanocoumarin which is part of the most toxic and carcinogenic compounds among the known mycotoxins. AflS exhibits no DNA-binding capability on its own, but forms a complex with the other aflatoxin cluster transcription factor aflR and acts as a modulator of aflR's DNA-binding by decreasing its DNA-binding affinity. This Aspergillus flavus (strain ATCC 200026 / FGSC A1120 / IAM 13836 / NRRL 3357 / JCM 12722 / SRRC 167) protein is Aflatoxin cluster transcriptional coactivator aflS.